An 89-amino-acid polypeptide reads, in one-letter code: MKHIVKILSLLVAISAFWIGLLQAAIIPRSHTWLLPIYFVVSLGCYGLLMVGVGLMQFPTCPQEAVLLQKDIAEAKDFFKHKGVDVGSN.

2 helical membrane-spanning segments follow: residues 7 to 27 and 33 to 53; these read ILSL…AAII and WLLP…MVGV.

It belongs to the DPM3 family. In terms of assembly, component of the dolichol-phosphate mannose (DPM) synthase complex composed of DPMS1, DPMS2 and DPMS3; in the complex interacts directly with DPMS1 and DPMS2.

It localises to the endoplasmic reticulum membrane. Its pathway is protein modification; protein glycosylation. In terms of biological role, regulates the biosynthesis of dolichol phosphate-mannose. Regulatory subunit of the dolichol-phosphate mannose (DPM) synthase complex; essential for the ER localization and stable expression of DPMS1. This chain is Dolichol-phosphate mannose synthase subunit 3, found in Arabidopsis thaliana (Mouse-ear cress).